The sequence spans 282 residues: Shikimate dehydrogenase (NADP(+)) (282 aa).

Shikimate-binding positions include 15–17 and T62; that span reads SKS. The active-site Proton acceptor is the K66. Residues N87 and D103 each coordinate shikimate. Residues 127–131, 151–156, and M220 each bind NADP(+); these read GAGGA and NRTHTK. Y222 is a shikimate binding site. G244 is a binding site for NADP(+).

The protein belongs to the shikimate dehydrogenase family. As to quaternary structure, homodimer.

The enzyme catalyses shikimate + NADP(+) = 3-dehydroshikimate + NADPH + H(+). It functions in the pathway metabolic intermediate biosynthesis; chorismate biosynthesis; chorismate from D-erythrose 4-phosphate and phosphoenolpyruvate: step 4/7. Its function is as follows. Involved in the biosynthesis of the chorismate, which leads to the biosynthesis of aromatic amino acids. Catalyzes the reversible NADPH linked reduction of 3-dehydroshikimate (DHSA) to yield shikimate (SA). In Shewanella baltica (strain OS155 / ATCC BAA-1091), this protein is Shikimate dehydrogenase (NADP(+)).